We begin with the raw amino-acid sequence, 607 residues long: UvrABC system protein C (607 aa).

A GIY-YIG domain is found at 15 to 93 (SEPGVYCMLD…IKKYQPRYNI (79 aa)). The UVR domain occupies 202–237 (HEVIADLIKKMEAASQQLNFELAAKVRDQIMLLRKM).

It belongs to the UvrC family. Interacts with UvrB in an incision complex.

Its subcellular location is the cytoplasm. Functionally, the UvrABC repair system catalyzes the recognition and processing of DNA lesions. UvrC both incises the 5' and 3' sides of the lesion. The N-terminal half is responsible for the 3' incision and the C-terminal half is responsible for the 5' incision. This Pseudoalteromonas translucida (strain TAC 125) protein is UvrABC system protein C.